A 397-amino-acid chain; its full sequence is Na(+)/H(+) antiporter NhaA 1 (397 aa).

12 helical membrane-spanning segments follow: residues 15–35 (FQLEAASGLLLIAAAVLALII), 42–62 (YLYGGLLEVPVAVQVGALNIA), 65–85 (LLLWINDGLMALFFLLIGLEV), 101–121 (ILPATAAVGGMVVPALIYWFI), 129–149 (VAGWAIPTATDIAFALGVLAL), 160–180 (LFLMTLAIIDDLGAIIVIALF), 183–203 (GTLSSVSLLLAAACLLVLVAM), 219–241 (LILWVCVLKSGVHATLAGVALAF), 265–285 (WVAYAILPIFAFANAGVSLAG), 299–319 (ITIGLLLGKTVGVFGLTWVAV), 335–355 (ILGVAILCGIGFTMSLFVGSL), and 370–390 (MGILTGSFFAAVIGYAVTAMA).

It belongs to the NhaA Na(+)/H(+) (TC 2.A.33) antiporter family.

It is found in the cell inner membrane. It catalyses the reaction Na(+)(in) + 2 H(+)(out) = Na(+)(out) + 2 H(+)(in). In terms of biological role, na(+)/H(+) antiporter that extrudes sodium in exchange for external protons. This is Na(+)/H(+) antiporter NhaA 1 from Pseudomonas putida (strain ATCC 47054 / DSM 6125 / CFBP 8728 / NCIMB 11950 / KT2440).